Reading from the N-terminus, the 331-residue chain is 3'-5' exonuclease (331 aa).

Positions 27–92 (ERVKQTNAAK…EDGPASPEKE (66 aa)) are disordered. A compositionally biased stretch (polar residues) spans 31–43 (QTNAAKKQIATNN). Residues 47 to 67 (KNQDTPEMIKDKENAESENPP) show a composition bias toward basic and acidic residues. 2 positions are modified to phosphoserine: Ser-80 and Ser-88. Residues 118–290 (SADEVMQWVE…IGQVIYREIE (173 aa)) enclose the 3'-5' exonuclease domain. Mg(2+) contacts are provided by Asp-140, Glu-142, and Asp-278.

This sequence belongs to the WRNexo family.

It localises to the nucleus. In terms of biological role, has exonuclease activity on both single-stranded and duplex templates bearing overhangs, but not blunt ended duplex DNA, and cleaves in a 3'-5' direction. Essential for the formation of DNA replication focal centers. Has an important role in maintaining genome stability. The sequence is that of 3'-5' exonuclease from Drosophila grimshawi (Hawaiian fruit fly).